The following is a 645-amino-acid chain: Cysteine-rich receptor-like protein kinase 19 (645 aa).

The first 20 residues, 1–20 (MSSLISFIFLFLFSSITASA), serve as a signal peptide directing secretion. The Extracellular portion of the chain corresponds to 21-262 (QNTFYLYHNC…PRPGKGGNSS (242 aa)). 2 consecutive Gnk2-homologous domains span residues 24–129 (FYLY…NRNI) and 135–239 (TDGG…NYAF). N-linked (GlcNAc...) asparagine glycans are attached at residues N29, N39, N57, N101, N185, N241, and N260. The helical transmembrane segment at 263-283 (VIIIAVVVPITVLFLLLVAVF) threads the bilayer. The Cytoplasmic segment spans residues 284 to 645 (SVRAKNKRTL…EASITRVTPR (362 aa)). In terms of domain architecture, Protein kinase spans 326-603 (FLPINKLGQG…IVQMLTTSLI (278 aa)). Residues 332-340 (LGQGGFGEV) and K354 contribute to the ATP site. Position 399 is a phosphotyrosine (Y399). The Proton acceptor role is filled by D451. Phosphothreonine is present on T491. Y499 is modified (phosphotyrosine). A disordered region spans residues 616-645 (RSKQEQAGPSIDSSTHCSVDEASITRVTPR). Over residues 620 to 632 (EQAGPSIDSSTHC) the composition is skewed to polar residues.

It belongs to the protein kinase superfamily. Ser/Thr protein kinase family. CRK subfamily. Interacts with MWL1.

Its subcellular location is the membrane. It catalyses the reaction L-seryl-[protein] + ATP = O-phospho-L-seryl-[protein] + ADP + H(+). It carries out the reaction L-threonyl-[protein] + ATP = O-phospho-L-threonyl-[protein] + ADP + H(+). The polypeptide is Cysteine-rich receptor-like protein kinase 19 (CRK19) (Arabidopsis thaliana (Mouse-ear cress)).